Here is a 1127-residue protein sequence, read N- to C-terminus: Nck-associated protein 1-like (1127 aa).

Positions 638–670 are disordered; it reads KAKNKKTRKQRQTPRKGEPERDKPGAESHRKNR. The span at 639–651 shows a compositional bias: basic residues; sequence AKNKKTRKQRQTP. Positions 652 to 666 are enriched in basic and acidic residues; that stretch reads RKGEPERDKPGAESH. The chain crosses the membrane as a helical span at residues 996-1016; sequence VACLLLIFLAVSLPLLATDPS.

Belongs to the HEM-1/HEM-2 family. In terms of assembly, in hematopoietic cells, component of the WAVE2 complex composed of ABI1, CYFIP1/SRA1, NCKAP1L/HEM1 and WASF2/WAVE2. Interacts with ARHGAP4, PIK3C3/VPS34 and PPP1R12A/MYPT1. Interacts with mammalian target of rapamycin complex 2 (mTORC2) components, including MTOR and RICTOR. Expressed only in cells of hematopoietic origin. Expressed in neutrophils (at protein level). Expressed in T-cells (at protein level).

The protein resides in the cell membrane. It is found in the cytoplasm. In terms of biological role, essential hematopoietic-specific regulator of the actin cytoskeleton. Controls lymphocyte development, activation, proliferation and homeostasis, erythrocyte membrane stability, as well as phagocytosis and migration by neutrophils and macrophages. Component of the WAVE2 complex which signals downstream of RAC to stimulate F-actin polymerization. Required for stabilization and/or translation of the WAVE2 complex proteins in hematopoietic cells. Within the WAVE2 complex, enables the cortical actin network to restrain excessive degranulation and granule release by T-cells. Required for efficient T-lymphocyte and neutrophil migration. Exhibits complex cycles of activation and inhibition to generate waves of propagating the assembly with actin. Also involved in mechanisms WAVE-independent to regulate myosin and actin polymerization during neutrophil chemotaxis. In T-cells, required for proper mechanistic target of rapamycin complex 2 (mTORC2)-dependent AKT phosphorylation, cell proliferation and cytokine secretion, including that of IL2 and TNF. This Homo sapiens (Human) protein is Nck-associated protein 1-like.